Here is a 304-residue protein sequence, read N- to C-terminus: MKLIPLASESLGVRSLATFLEIGKIGILIDPGAALGPKRYSLSPAKAELEALQKAREKIQQYSRKAQIITISHYHYDHHTPFFEGIYESSSPEKAKDIYSRKTLFIKHPRENINFSQKKRAWAFLKEAEKIVEKIEHADGKFFDFGDFIMEFSPAVPHGSEGSKLGFVVMVMVDDGKQRLIHASDIQLLNRASKEWIIKQMPDLLITGGPPTYLEGYRVKEAWSTGLKNLNEIIKETNAEVILDHHLIRDKRYPEFLEQLEKQALTFARFLKKEDRPLEAYRKELHKIEKGEEAEVPFDVGWYL.

Belongs to the UPF0282 family.

The polypeptide is UPF0282 protein TSIB_1029 (Thermococcus sibiricus (strain DSM 12597 / MM 739)).